Consider the following 109-residue polypeptide: Phosphoribosyl-ATP pyrophosphatase (109 aa).

Belongs to the PRA-PH family.

It is found in the cytoplasm. It carries out the reaction 1-(5-phospho-beta-D-ribosyl)-ATP + H2O = 1-(5-phospho-beta-D-ribosyl)-5'-AMP + diphosphate + H(+). It participates in amino-acid biosynthesis; L-histidine biosynthesis; L-histidine from 5-phospho-alpha-D-ribose 1-diphosphate: step 2/9. The polypeptide is Phosphoribosyl-ATP pyrophosphatase (Azorhizobium caulinodans (strain ATCC 43989 / DSM 5975 / JCM 20966 / LMG 6465 / NBRC 14845 / NCIMB 13405 / ORS 571)).